The primary structure comprises 66 residues: MRARELRAQTLDQMKDELAKLKKEQFNLRFQKATGQLEKAARVRQVRRDIARVKTFLRQKIKESKV.

The protein belongs to the universal ribosomal protein uL29 family.

The protein is Large ribosomal subunit protein uL29 of Bartonella quintana (strain Toulouse) (Rochalimaea quintana).